Here is a 289-residue protein sequence, read N- to C-terminus: Ribonuclease HII (289 aa).

The tract at residues 1 to 55 (MIRDQAKTPGRAKSAAAAKASPAAKGGGNEAAQSAAGKAAAKPAAKPATSKSGKG) is disordered. Composition is skewed to low complexity over residues 7 to 24 (KTPG…SPAA) and 31 to 55 (AAQS…SGKG). An RNase H type-2 domain is found at 76–264 (WPVAGCDEAG…VVAARRKHQP (189 aa)). Positions 82, 83, and 173 each coordinate a divalent metal cation.

This sequence belongs to the RNase HII family. Requires Mn(2+) as cofactor. Mg(2+) is required as a cofactor.

It localises to the cytoplasm. It catalyses the reaction Endonucleolytic cleavage to 5'-phosphomonoester.. Functionally, endonuclease that specifically degrades the RNA of RNA-DNA hybrids. The chain is Ribonuclease HII from Bradyrhizobium sp. (strain BTAi1 / ATCC BAA-1182).